We begin with the raw amino-acid sequence, 451 residues long: uncharacterized protein (451 aa).

One can recognise a TRAM domain in the interval 2 to 60 (NVVLKQRIPLKIKRMGINGEGIGFYKKTLIFVPGALKGEEVFCQISSVRRNFAEAKLLK). Residues Cys-73, Cys-79, Cys-82, and Cys-162 each contribute to the [4Fe-4S] cluster site. The S-adenosyl-L-methionine site is built by Gln-283, Tyr-312, Asp-333, and Asp-381. Cys-408 (nucleophile) is an active-site residue.

Belongs to the class I-like SAM-binding methyltransferase superfamily. RNA M5U methyltransferase family.

This is an uncharacterized protein from Streptococcus agalactiae serotype III (strain NEM316).